We begin with the raw amino-acid sequence, 492 residues long: Cysteine--tRNA ligase (492 aa).

Cys-29 serves as a coordination point for Zn(2+). The 'HIGH' region motif lies at 31–41; that stretch reads LTTSDPPHLGH. Zn(2+) contacts are provided by Cys-229, His-254, and Glu-258. The 'KMSKS' region motif lies at 286-290; sequence KMSSS.

This sequence belongs to the class-I aminoacyl-tRNA synthetase family. Zn(2+) serves as cofactor.

It localises to the cytoplasm. It carries out the reaction tRNA(Cys) + L-cysteine + ATP = L-cysteinyl-tRNA(Cys) + AMP + diphosphate. This is Cysteine--tRNA ligase from Haloarcula marismortui (strain ATCC 43049 / DSM 3752 / JCM 8966 / VKM B-1809) (Halobacterium marismortui).